The chain runs to 444 residues: Phosphoglucosamine mutase (444 aa).

The Phosphoserine intermediate role is filled by S101. Mg(2+)-binding residues include S101, D240, D242, and D244. S101 carries the post-translational modification Phosphoserine.

Belongs to the phosphohexose mutase family. Requires Mg(2+) as cofactor. Post-translationally, activated by phosphorylation.

The catalysed reaction is alpha-D-glucosamine 1-phosphate = D-glucosamine 6-phosphate. In terms of biological role, catalyzes the conversion of glucosamine-6-phosphate to glucosamine-1-phosphate. In Aeromonas salmonicida (strain A449), this protein is Phosphoglucosamine mutase.